The primary structure comprises 159 residues: Ribosomal RNA large subunit methyltransferase H (159 aa).

S-adenosyl-L-methionine is bound by residues L76, G108, and 127-132 (FSKMTL).

The protein belongs to the RNA methyltransferase RlmH family. Homodimer.

Its subcellular location is the cytoplasm. It carries out the reaction pseudouridine(1915) in 23S rRNA + S-adenosyl-L-methionine = N(3)-methylpseudouridine(1915) in 23S rRNA + S-adenosyl-L-homocysteine + H(+). Functionally, specifically methylates the pseudouridine at position 1915 (m3Psi1915) in 23S rRNA. The sequence is that of Ribosomal RNA large subunit methyltransferase H from Bacillus mycoides (strain KBAB4) (Bacillus weihenstephanensis).